Reading from the N-terminus, the 190-residue chain is Orotate phosphoribosyltransferase (190 aa).

114 to 122 is a 5-phospho-alpha-D-ribose 1-diphosphate binding site; that stretch reads EDVVTTGGS. The orotate site is built by Thr-118 and Arg-146.

It belongs to the purine/pyrimidine phosphoribosyltransferase family. PyrE subfamily. In terms of assembly, homodimer. Mg(2+) serves as cofactor.

It catalyses the reaction orotidine 5'-phosphate + diphosphate = orotate + 5-phospho-alpha-D-ribose 1-diphosphate. It functions in the pathway pyrimidine metabolism; UMP biosynthesis via de novo pathway; UMP from orotate: step 1/2. Functionally, catalyzes the transfer of a ribosyl phosphate group from 5-phosphoribose 1-diphosphate to orotate, leading to the formation of orotidine monophosphate (OMP). The polypeptide is Orotate phosphoribosyltransferase (Thermoanaerobacter sp. (strain X514)).